Here is a 357-residue protein sequence, read N- to C-terminus: Peptide chain release factor 1 (357 aa).

Gln234 carries the N5-methylglutamine modification. Residues 283–313 (SKKQEQRSSNRKQQVGSGDRSERIRTYNFPQ) form a disordered region.

The protein belongs to the prokaryotic/mitochondrial release factor family. Methylated by PrmC. Methylation increases the termination efficiency of RF1.

It is found in the cytoplasm. Its function is as follows. Peptide chain release factor 1 directs the termination of translation in response to the peptide chain termination codons UAG and UAA. The sequence is that of Peptide chain release factor 1 (prfA) from Borreliella burgdorferi (strain ATCC 35210 / DSM 4680 / CIP 102532 / B31) (Borrelia burgdorferi).